We begin with the raw amino-acid sequence, 589 residues long: Alpha-1,2-mannosyltransferase MNN22 (589 aa).

Topologically, residues 1-16 are cytoplasmic; sequence MGSIFKDGRRILVRPK. The helical transmembrane segment at 17–33 threads the bilayer; sequence SLIICLCLISIIFTQLI. At 34 to 589 the chain is on the extracellular side; sequence RYQYQLIADE…NTIAWLGKKT (556 aa). The tract at residues 50 to 77 is disordered; the sequence is EDHSSSQSLKNTKLNSTRSSSPISPPKS. Residues 54–71 show a composition bias toward polar residues; that stretch reads SSQSLKNTKLNSTRSSSP. N-linked (GlcNAc...) asparagine glycosylation is found at Asn64, Asn332, and Asn530.

The protein belongs to the MNN1/MNT family.

It is found in the golgi apparatus membrane. The protein operates within protein modification; protein glycosylation. In terms of biological role, alpha-1,2-mannosyltransferase required for cell wall integrity. Responsible for addition of the first alpha-1,2-linked mannose to form the branches on the mannan backbone of oligosaccharides. Addition of alpha-1,2-mannose is required for stabilization of the alpha-1,6-mannose backbone and hence regulates mannan fibril length; and is important for both immune recognition and virulence. The chain is Alpha-1,2-mannosyltransferase MNN22 (MNN22) from Candida albicans (strain SC5314 / ATCC MYA-2876) (Yeast).